The primary structure comprises 501 residues: Protein DETOXIFICATION 37 (501 aa).

Transmembrane regions (helical) follow at residues 44-64 (MMIEMKFLFHLAAPAIFVYVI), 84-104 (LAAASLGNSGFNMFTYGLLLG), 134-154 (VVLILTCLPMSFLFLFSNPIL), 163-183 (VATLASVFVYGMIPVIFAYAV), 200-220 (SAYISAATLVIHLILSWIAVY), 222-242 (LGYGLLALSLIHSFSWWIIVV), 280-300 (AVMLCLESWYSQILVLLAGLL), 310-330 (LAICMSISAISFMVSVGFNAA), 352-372 (VVTTGVSFLLSVFEAIVVLSW), 396-416 (FLAITIVLNGIQPVLSGVAVG), 422-442 (FVAYVNIGCYYVVGIPVGFVL), and 453-473 (IWTGMIGGTLMQTIILVIVTL).

The protein belongs to the multi antimicrobial extrusion (MATE) (TC 2.A.66.1) family.

The protein resides in the membrane. The polypeptide is Protein DETOXIFICATION 37 (Arabidopsis thaliana (Mouse-ear cress)).